A 296-amino-acid polypeptide reads, in one-letter code: 4-hydroxy-tetrahydrodipicolinate synthase (296 aa).

T47 lines the pyruvate pocket. The active-site Proton donor/acceptor is Y136. K164 (schiff-base intermediate with substrate) is an active-site residue. Pyruvate is bound at residue V206.

This sequence belongs to the DapA family. Homotetramer; dimer of dimers.

The protein localises to the cytoplasm. It catalyses the reaction L-aspartate 4-semialdehyde + pyruvate = (2S,4S)-4-hydroxy-2,3,4,5-tetrahydrodipicolinate + H2O + H(+). It participates in amino-acid biosynthesis; L-lysine biosynthesis via DAP pathway; (S)-tetrahydrodipicolinate from L-aspartate: step 3/4. Its function is as follows. Catalyzes the condensation of (S)-aspartate-beta-semialdehyde [(S)-ASA] and pyruvate to 4-hydroxy-tetrahydrodipicolinate (HTPA). The polypeptide is 4-hydroxy-tetrahydrodipicolinate synthase (Thermosynechococcus vestitus (strain NIES-2133 / IAM M-273 / BP-1)).